A 2025-amino-acid polypeptide reads, in one-letter code: E3 ubiquitin-protein ligase TRIP12 (2025 aa).

Over residues 1 to 10 the composition is skewed to polar residues; the sequence is MSNRPNNNPG. Residues 1 to 404 are disordered; it reads MSNRPNNNPG…SGESESDDSE (404 aa). Serine 2 carries the N-acetylserine modification. Serine 12 carries the phosphoserine modification. Over residues 18–27 the composition is skewed to polar residues; that stretch reads RNTAGAQPQD. Positions 48 to 70 are enriched in basic and acidic residues; sequence DPDRANTSERQKTGQVPKKDNSR. Phosphoserine is present on residues serine 77, serine 85, and serine 100. The span at 78-88 shows a compositional bias: polar residues; that stretch reads PDYNRTNSPSS. Over residues 119–132 the composition is skewed to polar residues; it reads EQQLKSAQLPSTSK. Low complexity-rich tracts occupy residues 154–166 and 177–215; these read SSCV…SEST and KLAS…ASST. Lysine 181 is subject to N6-acetyllysine. The segment covering 280 to 290 has biased composition (polar residues); it reads PGSSKSETSKP. A phosphoserine mark is found at serine 310 and serine 312. Over residues 326–338 the composition is skewed to polar residues; the sequence is QKTTGSCASTSRR. Positions 346–358 are enriched in basic and acidic residues; the sequence is GAAEARRQEKMAD. A compositionally biased stretch (polar residues) spans 360 to 371; that stretch reads ESNQETVNSSAA. Residues 379–397 show a composition bias toward low complexity; the sequence is GAAASSSVAGAVGMTTSGE. Residues 755-869 enclose the WWE domain; sequence MLKKGNAQNT…DPELAKSFIK (115 aa). Residues 970-1077 are disordered; it reads ESLLTSPPKA…QSPKSSFLAS (108 aa). Residue serine 975 is modified to Phosphoserine. A compositionally biased stretch (low complexity) spans 983–1006; it reads GSGSLGSTTPASSGTATAATNASA. Phosphoserine occurs at positions 1024 and 1030. Positions 1034 to 1047 are enriched in basic residues; the sequence is KRKRLPKRGPRRPK. Residue serine 1049 is modified to Phosphoserine. Residues 1050–1059 show a composition bias toward basic and acidic residues; the sequence is PPRDDDKVDN. Low complexity predominate over residues 1062–1073; sequence KSPTTTQSPKSS. Phosphoserine occurs at positions 1063, 1350, 1355, 1362, and 1409. Threonine 1410 is modified (phosphothreonine). Disordered stretches follow at residues 1441-1466 and 1601-1620; these read TKDC…NAKK and TNPE…PRLD. Lysine 1458 is subject to N6-acetyllysine. A Phosphoserine modification is found at serine 1460. A K-box region spans residues 1529–1603; it reads EIIPTSEFIN…AMQRLLDTNP (75 aa). An HECT domain is found at 1918-2025; sequence PDHGYTHDSR…REGQQSFHLS (108 aa). Cysteine 1992 (glycyl thioester intermediate) is an active-site residue.

The protein belongs to the UPL family. K-HECT subfamily. In terms of assembly, interacts with MYC; leading to disrupt interaction with isoform p19ARF/ARF of CDKN2A. Interacts with TRADD; leading to disrupt interaction with isoform p19ARF/ARF of CDKN2A. Interacts with SMARCC1; leading to disrupt interaction with SMARCE1.

The protein resides in the nucleus. The protein localises to the nucleoplasm. The enzyme catalyses S-ubiquitinyl-[E2 ubiquitin-conjugating enzyme]-L-cysteine + [acceptor protein]-L-lysine = [E2 ubiquitin-conjugating enzyme]-L-cysteine + N(6)-ubiquitinyl-[acceptor protein]-L-lysine.. It participates in protein modification; protein ubiquitination. Its function is as follows. E3 ubiquitin-protein ligase involved in ubiquitin fusion degradation (UFD) pathway and regulation of DNA repair. Part of the ubiquitin fusion degradation (UFD) pathway, a process that mediates ubiquitination of protein at their N-terminus, regardless of the presence of lysine residues in target proteins. Acts as a key regulator of DNA damage response by acting as a suppressor of RNF168, an E3 ubiquitin-protein ligase that promotes accumulation of 'Lys-63'-linked histone H2A and H2AX at DNA damage sites, thereby acting as a guard against excessive spreading of ubiquitinated chromatin at damaged chromosomes. In normal cells, mediates ubiquitination and degradation of isoform p19ARF/ARF of CDKN2A, a lysine-less tumor suppressor required for p53/TP53 activation under oncogenic stress. In cancer cells, however, isoform p19ARF/ARF and TRIP12 are located in different cell compartments, preventing isoform p19ARF/ARF ubiquitination and degradation. Does not mediate ubiquitination of isoform p16-INK4a of CDKN2A. Also catalyzes ubiquitination of NAE1 and SMARCE1, leading to their degradation. Ubiquitination and degradation of target proteins is regulated by interaction with proteins such as MYC, TRADD or SMARCC1, which disrupt the interaction between TRIP12 and target proteins. Mediates ubiquitination of ASXL1: following binding to N(6)-methyladenosine methylated DNA, ASXL1 is ubiquitinated by TRIP12, leading to its degradation and subsequent inactivation of the PR-DUB complex. This is E3 ubiquitin-protein ligase TRIP12 (Trip12) from Mus musculus (Mouse).